Here is a 154-residue protein sequence, read N- to C-terminus: Urease subunit alpha (154 aa).

Residues 38–154 (GGIDTHIHFI…ADEMDIQVAI (117 aa)) enclose the Urease domain. The Ni(2+) site is built by His-43, His-45, and Lys-126. Lys-126 is subject to N6-carboxylysine. Residue His-128 coordinates substrate.

The protein belongs to the metallo-dependent hydrolases superfamily. Urease alpha subunit family. As to quaternary structure, heterotrimer of UreA (gamma), UreB (beta) and UreC (alpha) subunits. Three heterotrimers associate to form the active enzyme. Ni cation is required as a cofactor. Carboxylation allows a single lysine to coordinate two nickel ions.

The protein resides in the cytoplasm. It catalyses the reaction urea + 2 H2O + H(+) = hydrogencarbonate + 2 NH4(+). It participates in nitrogen metabolism; urea degradation; CO(2) and NH(3) from urea (urease route): step 1/1. The protein is Urease subunit alpha (ureC) of Photobacterium damselae subsp. damselae (Listonella damsela).